A 142-amino-acid chain; its full sequence is Nucleoside diphosphate kinase (142 aa).

The ATP site is built by Lys9, Phe57, Arg85, Thr91, Arg102, and Asn112. The segment at 87-106 (AMGATDPAKSEKGTVRGDLG) is disordered. Catalysis depends on His115, which acts as the Pros-phosphohistidine intermediate.

The protein belongs to the NDK family. In terms of assembly, homotetramer. The cofactor is Mg(2+).

It localises to the cytoplasm. It catalyses the reaction a 2'-deoxyribonucleoside 5'-diphosphate + ATP = a 2'-deoxyribonucleoside 5'-triphosphate + ADP. The enzyme catalyses a ribonucleoside 5'-diphosphate + ATP = a ribonucleoside 5'-triphosphate + ADP. Its function is as follows. Major role in the synthesis of nucleoside triphosphates other than ATP. The ATP gamma phosphate is transferred to the NDP beta phosphate via a ping-pong mechanism, using a phosphorylated active-site intermediate. This chain is Nucleoside diphosphate kinase, found in Dehalococcoides mccartyi (strain ATCC BAA-2266 / KCTC 15142 / 195) (Dehalococcoides ethenogenes (strain 195)).